Consider the following 502-residue polypeptide: Premnaspirodiene oxygenase (502 aa).

The helical transmembrane segment at 2-22 (QFFSLVSIFLFLSFLFLLRKW) threads the bilayer. Residue C440 participates in heme binding.

This sequence belongs to the cytochrome P450 family. The cofactor is heme.

It localises to the membrane. The catalysed reaction is (-)-vetispiradiene + 2 reduced [NADPH--hemoprotein reductase] + 2 O2 = solavetivone + 2 oxidized [NADPH--hemoprotein reductase] + 3 H2O + 2 H(+). Functionally, involved in the biosynthesis of solavetivone, a potent antifungal phytoalexin. Catalyzes the successive and independent hydroxylations of premnaspirodiene and solavetivol. The first hydroxylation step is 3-fold more efficient than the second hydroxylation reaction. This Hyoscyamus muticus (Egyptian henbane) protein is Premnaspirodiene oxygenase (CYP71D55).